A 196-amino-acid chain; its full sequence is Ribonuclease HII (196 aa).

Residues 15-196 (FILAGIDEAG…RLSFTKALYK (182 aa)) form the RNase H type-2 domain. A divalent metal cation-binding residues include D21, E22, and D112.

This sequence belongs to the RNase HII family. Mn(2+) serves as cofactor. Mg(2+) is required as a cofactor.

The protein localises to the cytoplasm. The catalysed reaction is Endonucleolytic cleavage to 5'-phosphomonoester.. In terms of biological role, endonuclease that specifically degrades the RNA of RNA-DNA hybrids. This is Ribonuclease HII from Rickettsia bellii (strain OSU 85-389).